The following is a 430-amino-acid chain: 5-methylthioadenosine/S-adenosylhomocysteine deaminase (430 aa).

Residues His-63 and His-65 each coordinate Zn(2+). Glu-92, Arg-144, and His-182 together coordinate substrate. His-209 is a Zn(2+) binding site. Substrate is bound by residues Glu-212 and Asp-297. Zn(2+) is bound at residue Asp-297.

This sequence belongs to the metallo-dependent hydrolases superfamily. MTA/SAH deaminase family. Zn(2+) is required as a cofactor.

The enzyme catalyses S-adenosyl-L-homocysteine + H2O + H(+) = S-inosyl-L-homocysteine + NH4(+). It catalyses the reaction S-methyl-5'-thioadenosine + H2O + H(+) = S-methyl-5'-thioinosine + NH4(+). Its function is as follows. Catalyzes the deamination of 5-methylthioadenosine and S-adenosyl-L-homocysteine into 5-methylthioinosine and S-inosyl-L-homocysteine, respectively. Is also able to deaminate adenosine. In Desulforudis audaxviator (strain MP104C), this protein is 5-methylthioadenosine/S-adenosylhomocysteine deaminase.